Reading from the N-terminus, the 198-residue chain is Recombination protein RecR (198 aa).

A C4-type zinc finger spans residues 57 to 72; the sequence is CDKCNTFTEAQICEVC. The Toprim domain occupies 80 to 175; it reads TLLCVVETPA…AVTRLARGVP (96 aa).

Belongs to the RecR family.

In terms of biological role, may play a role in DNA repair. It seems to be involved in an RecBC-independent recombinational process of DNA repair. It may act with RecF and RecO. The protein is Recombination protein RecR of Burkholderia multivorans (strain ATCC 17616 / 249).